Consider the following 760-residue polypeptide: Probable ubiquitin carboxyl-terminal hydrolase creB (760 aa).

The tract at residues 1-28 (MGSFLRSFRNNAGSTTPSVGAVPAKKEV) is disordered. A compositionally biased stretch (polar residues) spans 8–18 (FRNNAGSTTPS). Residues 55 to 469 (YGMENYGNTC…CAYVLFYQET (415 aa)) form the USP domain. Catalysis depends on Cys64, which acts as the Nucleophile. Disordered stretches follow at residues 114 to 146 (AEAQAEKQRAANAQRPGMPPAQPQKPEDKDSPD) and 242 to 270 (PAAIEKSLPAPDHAETVDQSASSGSKTPN). A compositionally biased stretch (polar residues) spans 258–270 (VDQSASSGSKTPN). His420 serves as the catalytic Proton acceptor. The segment at 520–760 (EEHNRPNGLK…LRKKSFSILS (241 aa)) is disordered. Positions 575 to 635 (KSDVQGKKER…AALEASKASK (61 aa)) form a coiled coil. Basic and acidic residues-rich tracts occupy residues 578 to 626 (VQGK…ELKA), 635 to 651 (KAQEDRRQSPDHGKDKL), and 708 to 742 (DPKDDPFQDSHHPNKPMMKEDEQANHKDPKHERTG). Basic residues predominate over residues 743–760 (HGKWRSFSLRKKSFSILS).

The protein belongs to the peptidase C19 family. As to quaternary structure, interacts with creA, creC and qutD.

It carries out the reaction Thiol-dependent hydrolysis of ester, thioester, amide, peptide and isopeptide bonds formed by the C-terminal Gly of ubiquitin (a 76-residue protein attached to proteins as an intracellular targeting signal).. In terms of biological role, ubiquitin thioesterase component of the regulatory network controlling carbon source utilization through ubiquitination and deubiquitination involving creA, creB, creC, creD and acrB. Deubiquitinates the creA catabolic repressor and the quinate permease qutD. Also plays a role in response to carbon starvation and the control of extracellular proteases activity. This Aspergillus clavatus (strain ATCC 1007 / CBS 513.65 / DSM 816 / NCTC 3887 / NRRL 1 / QM 1276 / 107) protein is Probable ubiquitin carboxyl-terminal hydrolase creB (creB).